The chain runs to 636 residues: Threonine--tRNA ligase (636 aa).

A TGS domain is found at 1-63 (MNEINVTLPD…ADGARVEIVT (63 aa)). The segment at 243-534 (DHRKLGRELD…LIEHFAGNFP (292 aa)) is catalytic. Residues cysteine 335, histidine 386, and histidine 511 each coordinate Zn(2+).

Belongs to the class-II aminoacyl-tRNA synthetase family. In terms of assembly, homodimer. The cofactor is Zn(2+).

It is found in the cytoplasm. The enzyme catalyses tRNA(Thr) + L-threonine + ATP = L-threonyl-tRNA(Thr) + AMP + diphosphate + H(+). Functionally, catalyzes the attachment of threonine to tRNA(Thr) in a two-step reaction: L-threonine is first activated by ATP to form Thr-AMP and then transferred to the acceptor end of tRNA(Thr). Also edits incorrectly charged L-seryl-tRNA(Thr). This Geobacter sp. (strain M21) protein is Threonine--tRNA ligase.